We begin with the raw amino-acid sequence, 161 residues long: Nucleotide-binding protein Ssed_3443 (161 aa).

It belongs to the YajQ family.

In terms of biological role, nucleotide-binding protein. This chain is Nucleotide-binding protein Ssed_3443, found in Shewanella sediminis (strain HAW-EB3).